Reading from the N-terminus, the 101-residue chain is Putative defensin-like protein 253 (101 aa).

Residues 1-23 (MRFASLFVVYCTFMFLDISHVKC) form the signal peptide. Disulfide bonds link Cys31-Cys84, Cys41-Cys66, Cys49-Cys76, and Cys64-Cys78.

Belongs to the DEFL family.

It localises to the secreted. In Arabidopsis thaliana (Mouse-ear cress), this protein is Putative defensin-like protein 253 (SCRL15).